Consider the following 486-residue polypeptide: UDP-N-acetylmuramate--L-alanine ligase (486 aa).

Position 123 to 129 (123 to 129 (GTHGKTT)) interacts with ATP.

Belongs to the MurCDEF family.

It is found in the cytoplasm. The catalysed reaction is UDP-N-acetyl-alpha-D-muramate + L-alanine + ATP = UDP-N-acetyl-alpha-D-muramoyl-L-alanine + ADP + phosphate + H(+). The protein operates within cell wall biogenesis; peptidoglycan biosynthesis. Functionally, cell wall formation. In Pseudomonas syringae pv. syringae (strain B728a), this protein is UDP-N-acetylmuramate--L-alanine ligase.